A 345-amino-acid chain; its full sequence is Serine/arginine-rich splicing factor 6 (345 aa).

In terms of domain architecture, RRM 1 spans 1-72; the sequence is MPRVYIGRLS…ERVIVEHARG (72 aa). Ser-45, Ser-81, and Ser-84 each carry phosphoserine. The disordered stretch occupies residues 75-102; it reads RDRDGYSYGSRSGGGGYSSRRTSGRDKY. The 74-residue stretch at 110-183 folds into the RRM 2 domain; the sequence is FRLIVENLSS…RNIRLIEDKP (74 aa). Lys-165 is modified (N6-acetyllysine). The interval 176–345 is disordered; it reads IRLIEDKPRT…RSRSRSSSRD (170 aa). Lys-182 participates in a covalent cross-link: Glycyl lysine isopeptide (Lys-Gly) (interchain with G-Cter in SUMO2). Over residues 185–250 the composition is skewed to basic residues; sequence TSHRRSYSGS…RKSRSKSKSK (66 aa). 2 stretches are compositionally biased toward basic and acidic residues: residues 264–273 and 282–293; these read RSKDEYEKSR and SPKENGKGDIKS. A phosphoserine mark is found at Ser-299 and Ser-301. Ser-305 bears the Phosphoserine; by DYRK1A mark. Phosphoserine occurs at positions 316 and 318. Residues 323–345 show a composition bias toward basic residues; it reads RASRSHSRSRSKSRSRSRSSSRD.

This sequence belongs to the splicing factor SR family. In terms of assembly, binds SREK1/SFRS12. Interacts with DYRK1A. Extensively phosphorylated on serine residues in the RS domain. Phosphorylated by DYRK1A, probably in the RS domain. Phosphorylation by DYRK1A modulates alternative splice site selection and inhibits the expression of MAPT/Tau exon 10.

The protein localises to the nucleus. It is found in the nucleus speckle. Plays a role in constitutive splicing and modulates the selection of alternative splice sites. Plays a role in the alternative splicing of MAPT/Tau exon 10. Binds to alternative exons of TNC pre-mRNA and promotes the expression of alternatively spliced TNC. Plays a role in wound healing and in the regulation of keratinocyte differentiation and proliferation via its role in alternative splicing. The protein is Serine/arginine-rich splicing factor 6 (SRSF6) of Bos taurus (Bovine).